Here is a 320-residue protein sequence, read N- to C-terminus: Lipoyl synthase (320 aa).

The tract at residues 1 to 27 is disordered; the sequence is MRVEIDHRNSGGGKLRHPEKQHRPDNP. Residues 16–25 are compositionally biased toward basic and acidic residues; that stretch reads RHPEKQHRPD. The [4Fe-4S] cluster site is built by C61, C66, C72, C87, C91, C94, and S300. In terms of domain architecture, Radical SAM core spans 73–289; the sequence is WSQRHATMMI…AAMARAKGFL (217 aa).

This sequence belongs to the radical SAM superfamily. Lipoyl synthase family. [4Fe-4S] cluster is required as a cofactor.

Its subcellular location is the cytoplasm. It carries out the reaction [[Fe-S] cluster scaffold protein carrying a second [4Fe-4S](2+) cluster] + N(6)-octanoyl-L-lysyl-[protein] + 2 oxidized [2Fe-2S]-[ferredoxin] + 2 S-adenosyl-L-methionine + 4 H(+) = [[Fe-S] cluster scaffold protein] + N(6)-[(R)-dihydrolipoyl]-L-lysyl-[protein] + 4 Fe(3+) + 2 hydrogen sulfide + 2 5'-deoxyadenosine + 2 L-methionine + 2 reduced [2Fe-2S]-[ferredoxin]. The protein operates within protein modification; protein lipoylation via endogenous pathway; protein N(6)-(lipoyl)lysine from octanoyl-[acyl-carrier-protein]: step 2/2. Functionally, catalyzes the radical-mediated insertion of two sulfur atoms into the C-6 and C-8 positions of the octanoyl moiety bound to the lipoyl domains of lipoate-dependent enzymes, thereby converting the octanoylated domains into lipoylated derivatives. This chain is Lipoyl synthase, found in Acidiphilium cryptum (strain JF-5).